Consider the following 228-residue polypeptide: Carboxy-S-adenosyl-L-methionine synthase (228 aa).

S-adenosyl-L-methionine contacts are provided by residues Y30, 55-57 (GSS), 79-80 (DN), and 103-104 (DV).

The protein belongs to the class I-like SAM-binding methyltransferase superfamily. Cx-SAM synthase family.

The catalysed reaction is prephenate + S-adenosyl-L-methionine = carboxy-S-adenosyl-L-methionine + 3-phenylpyruvate + H2O. Functionally, catalyzes the conversion of S-adenosyl-L-methionine (SAM) to carboxy-S-adenosyl-L-methionine (Cx-SAM). In Staphylococcus epidermidis (strain ATCC 35984 / DSM 28319 / BCRC 17069 / CCUG 31568 / BM 3577 / RP62A), this protein is Carboxy-S-adenosyl-L-methionine synthase.